Reading from the N-terminus, the 301-residue chain is ATP synthase F(0) complex subunit B1, mitochondrial (301 aa).

The N-terminal 21 residues, 1-21 (MSLSRLSSPQTFSRVFIVARG), are a transit peptide targeting the mitochondrion.

Belongs to the eukaryotic ATPase B chain family. As to quaternary structure, subunit of the F-type ATPase which has 2 components, CF(1) - the catalytic core - and CF(0) - the membrane proton channel.

It is found in the mitochondrion. It localises to the mitochondrion inner membrane. In terms of biological role, mitochondrial membrane ATP synthase (F(1)F(0) ATP synthase or Complex V) produces ATP from ADP in the presence of a proton gradient across the membrane which is generated by electron transport complexes of the respiratory chain. F-type ATPases consist of two structural domains, F(1) - containing the extramembraneous catalytic core, and F(0) - containing the membrane proton channel, linked together by a central stalk and a peripheral stalk. During catalysis, ATP synthesis in the catalytic domain of F(1) is coupled via a rotary mechanism of the central stalk subunits to proton translocation. Part of the complex F(0) domain and the peripheric stalk, which acts as a stator to hold the subunits of the catalytic subcomplexes relative to the rotary elements. Plays a role in germline development. The sequence is that of ATP synthase F(0) complex subunit B1, mitochondrial from Caenorhabditis elegans.